The chain runs to 603 residues: Elongation factor 4 (603 aa).

The region spanning 7 to 189 (SRIRNFSIIA…SIVHLVPPPQ (183 aa)) is the tr-type G domain. Residues 19–24 (DHGKST) and 136–139 (NKID) each bind GTP.

This sequence belongs to the TRAFAC class translation factor GTPase superfamily. Classic translation factor GTPase family. LepA subfamily.

The protein localises to the cell inner membrane. It carries out the reaction GTP + H2O = GDP + phosphate + H(+). Required for accurate and efficient protein synthesis under certain stress conditions. May act as a fidelity factor of the translation reaction, by catalyzing a one-codon backward translocation of tRNAs on improperly translocated ribosomes. Back-translocation proceeds from a post-translocation (POST) complex to a pre-translocation (PRE) complex, thus giving elongation factor G a second chance to translocate the tRNAs correctly. Binds to ribosomes in a GTP-dependent manner. This chain is Elongation factor 4, found in Cyanothece sp. (strain PCC 7425 / ATCC 29141).